Here is a 391-residue protein sequence, read N- to C-terminus: DNA repair protein NreA (391 aa).

The C4-type zinc-finger motif lies at 6–20 (CAECKGKLLCGRSKC). The PIP motif motif lies at 382 to 389 (QTSLASFF).

The protein belongs to the Nre family. In terms of assembly, interacts with the DNA polymerase sliding clamp (PCNA) via the PIP (PCNA-interacting peptide) motif.

Its function is as follows. Involved in DNA damage repair. This is DNA repair protein NreA from Archaeoglobus fulgidus (strain ATCC 49558 / DSM 4304 / JCM 9628 / NBRC 100126 / VC-16).